A 210-amino-acid polypeptide reads, in one-letter code: Thymidylate kinase (210 aa).

11–18 is a binding site for ATP; the sequence is GLEGAGKS.

Belongs to the thymidylate kinase family.

The catalysed reaction is dTMP + ATP = dTDP + ADP. In terms of biological role, phosphorylation of dTMP to form dTDP in both de novo and salvage pathways of dTTP synthesis. In Histophilus somni (strain 2336) (Haemophilus somnus), this protein is Thymidylate kinase.